Here is a 317-residue protein sequence, read N- to C-terminus: Aspartate carbamoyltransferase catalytic subunit (317 aa).

Arg64 and Thr65 together coordinate carbamoyl phosphate. Lys92 contributes to the L-aspartate binding site. The carbamoyl phosphate site is built by Arg114, His142, and Gln145. Residues Arg176 and Arg230 each contribute to the L-aspartate site. Carbamoyl phosphate is bound by residues Gly271 and Pro272.

This sequence belongs to the aspartate/ornithine carbamoyltransferase superfamily. ATCase family. In terms of assembly, heterododecamer (2C3:3R2) of six catalytic PyrB chains organized as two trimers (C3), and six regulatory PyrI chains organized as three dimers (R2).

It carries out the reaction carbamoyl phosphate + L-aspartate = N-carbamoyl-L-aspartate + phosphate + H(+). It participates in pyrimidine metabolism; UMP biosynthesis via de novo pathway; (S)-dihydroorotate from bicarbonate: step 2/3. Catalyzes the condensation of carbamoyl phosphate and aspartate to form carbamoyl aspartate and inorganic phosphate, the committed step in the de novo pyrimidine nucleotide biosynthesis pathway. The chain is Aspartate carbamoyltransferase catalytic subunit from Nitratidesulfovibrio vulgaris (strain ATCC 29579 / DSM 644 / CCUG 34227 / NCIMB 8303 / VKM B-1760 / Hildenborough) (Desulfovibrio vulgaris).